Consider the following 320-residue polypeptide: Ferrochelatase (320 aa).

The Fe cation site is built by His-194 and Glu-275.

The protein belongs to the ferrochelatase family. Monomer.

The protein localises to the cytoplasm. The catalysed reaction is heme b + 2 H(+) = protoporphyrin IX + Fe(2+). Its pathway is porphyrin-containing compound metabolism; protoheme biosynthesis; protoheme from protoporphyrin-IX: step 1/1. Its function is as follows. Catalyzes the ferrous insertion into protoporphyrin IX. The sequence is that of Ferrochelatase from Escherichia coli (strain 55989 / EAEC).